We begin with the raw amino-acid sequence, 997 residues long: Protein HIR2 (997 aa).

5 WD repeats span residues 10–48 (GISG…DTAF), 117–152 (VSQS…TRSA), 153–194 (NKKE…VVYH), 274–319 (VHSP…PLFA), and 323–362 (ISDS…LGKT). Residues 408 to 584 (ADNSSNILST…RKPKEDALGN (177 aa)) form a disordered region. Residues 409 to 446 (DNSSNILSTDTNTNEKNLSTVNTTEPQTNSQSSSYNNK) are compositionally biased toward polar residues. Residues 464-480 (SDEKAKNLEARPIEAKS) show a composition bias toward basic and acidic residues. The span at 491-501 (SKSSSVTTSDN) shows a compositional bias: polar residues. The segment covering 518 to 538 (TEKKTKPDKKSIKSENGESKV) has biased composition (basic and acidic residues). A compositionally biased stretch (polar residues) spans 539–567 (NKAQNTISPKESNTTDNKSTTPDFKNPSY). WD repeat units lie at residues 665–706 (LFQD…IIPP) and 708–745 (TIGV…LEFP).

The protein belongs to the WD repeat HIR1 family.

It is found in the nucleus. Functionally, required for replication-independent chromatin assembly and for the periodic repression of histone gene transcription during the cell cycle. This is Protein HIR2 (HIR2) from Candida glabrata (strain ATCC 2001 / BCRC 20586 / JCM 3761 / NBRC 0622 / NRRL Y-65 / CBS 138) (Yeast).